Reading from the N-terminus, the 281-residue chain is MNTPDQSQLGRVSGYADQYDASLLFPLPRQPKRHEIGVTGTPPFFGADLWTAFELSWLNLRGKPQVALAHITVPCETPNIIESKSFKLYLNSFNNTRFADAAQVQTRIRTDISEAAWRGSDRQATVGVKLVLPEMFDREPVQELDGLLLDRLDVECTHYTPAPELLHANHGEAPVTETLTSHLLKSNCLVTGQPDWGSVRIEYSGAQIDQSGLLRYLVSFRNHNEFHEQCVERIFMDLWTRCRPIKLSVYARYTRRGGLDINPLRTSHPQALPANVRTARQ.

Residue 81 to 83 (IES) coordinates substrate. Residue 83 to 84 (SK) coordinates NADPH. Cys188 functions as the Thioimide intermediate in the catalytic mechanism. The active-site Proton donor is the Asp195. 227–228 (HE) is a substrate binding site. 256–257 (RG) contacts NADPH.

Belongs to the GTP cyclohydrolase I family. QueF type 2 subfamily. As to quaternary structure, homodimer.

Its subcellular location is the cytoplasm. The catalysed reaction is 7-aminomethyl-7-carbaguanine + 2 NADP(+) = 7-cyano-7-deazaguanine + 2 NADPH + 3 H(+). It functions in the pathway tRNA modification; tRNA-queuosine biosynthesis. Catalyzes the NADPH-dependent reduction of 7-cyano-7-deazaguanine (preQ0) to 7-aminomethyl-7-deazaguanine (preQ1). This is NADPH-dependent 7-cyano-7-deazaguanine reductase from Paracidovorax citrulli (strain AAC00-1) (Acidovorax citrulli).